The chain runs to 259 residues: Flagellar brake protein YcgR (259 aa).

The 118-residue stretch at 129-246 folds into the PilZ domain; that stretch reads QRREFYRLQT…DNAIQRYIFK (118 aa).

Belongs to the YcgR family. As to quaternary structure, monomer. Interacts with the flagellar basal bodies.

The protein resides in the bacterial flagellum basal body. In terms of biological role, acts as a flagellar brake, regulating swimming and swarming in a bis-(3'-5') cyclic diguanylic acid (c-di-GMP)-dependent manner. Binds 1 c-di-GMP dimer per subunit. Increasing levels of c-di-GMP lead to decreased motility. This chain is Flagellar brake protein YcgR, found in Azoarcus sp. (strain BH72).